The following is a 262-amino-acid chain: Small ribosomal subunit protein uS2 (262 aa).

This sequence belongs to the universal ribosomal protein uS2 family.

The sequence is that of Small ribosomal subunit protein uS2 from Borreliella burgdorferi (strain ZS7) (Borrelia burgdorferi).